A 394-amino-acid polypeptide reads, in one-letter code: Anthocyanidin 3-O-glucosyltransferase 6 (394 aa).

Catalysis depends on Asp-37, which acts as the Charge relay. Residues Thr-59, Ala-267, Gln-269, His-284, Trp-287, Asn-288, Ser-289, and Glu-292 each contribute to the UDP-alpha-D-glucose site. Ala-307 is a binding site for an anthocyanidin. 2 residues coordinate UDP-alpha-D-glucose: Glu-308 and Gln-309.

The protein belongs to the UDP-glycosyltransferase family. As to expression, expressed in cotyledons and leaves.

It carries out the reaction an anthocyanidin + UDP-alpha-D-glucose + H(+) = an anthocyanidin 3-O-beta-D-glucoside + UDP. It functions in the pathway pigment biosynthesis; anthocyanin biosynthesis. In the presence of other necessary color factors, this glycosylation reaction allows the accumulation of anthocyanin pigments. May be involved in glycosylation of unstable cyanohydrins to produce stable cyanoglucosides. In Manihot esculenta (Cassava), this protein is Anthocyanidin 3-O-glucosyltransferase 6 (GT6).